The following is a 505-amino-acid chain: Outer capsid protein VP5 (505 aa).

The tract at residues 1 to 42 is involved in membrane permeabilization; sequence MGKFTSFLKRAGNATKRALTSDSAKKMYKLAGKTLQRVVESE.

The protein belongs to the orbivirus VP5 family.

It is found in the virion. Its function is as follows. VP5 protein is one of the two proteins (with VP2) which constitute the virus particle outer capsid. Acts as a membrane permeabilization protein that mediates release of viral particles from endosomal compartments into the cytoplasm. Permeabilization activity is probably negatively regulated by VP2 and is triggered by endosomal degradation of VP2 and exposure to low pH. In African horse sickness virus (AHSV), this protein is Outer capsid protein VP5 (Segment-6).